The primary structure comprises 468 residues: Glutamate--tRNA ligase 2 (468 aa).

The 'HIGH' region motif lies at 9-19; the sequence is PSPTGFLHIGG. The 'KMSKS' region motif lies at 238–242; that stretch reads KLSKR. ATP is bound at residue lysine 241.

The protein belongs to the class-I aminoacyl-tRNA synthetase family. Glutamate--tRNA ligase type 1 subfamily. In terms of assembly, monomer.

Its subcellular location is the cytoplasm. The enzyme catalyses tRNA(Glu) + L-glutamate + ATP = L-glutamyl-tRNA(Glu) + AMP + diphosphate. Catalyzes the attachment of glutamate to tRNA(Glu) in a two-step reaction: glutamate is first activated by ATP to form Glu-AMP and then transferred to the acceptor end of tRNA(Glu). This chain is Glutamate--tRNA ligase 2, found in Rhodospirillum centenum (strain ATCC 51521 / SW).